We begin with the raw amino-acid sequence, 486 residues long: Glutamyl-tRNA(Gln) amidotransferase subunit A (486 aa).

Catalysis depends on charge relay system residues Lys-80 and Ser-155. Catalysis depends on Ser-179, which acts as the Acyl-ester intermediate.

Belongs to the amidase family. GatA subfamily. Heterotrimer of A, B and C subunits.

The catalysed reaction is L-glutamyl-tRNA(Gln) + L-glutamine + ATP + H2O = L-glutaminyl-tRNA(Gln) + L-glutamate + ADP + phosphate + H(+). Functionally, allows the formation of correctly charged Gln-tRNA(Gln) through the transamidation of misacylated Glu-tRNA(Gln) in organisms which lack glutaminyl-tRNA synthetase. The reaction takes place in the presence of glutamine and ATP through an activated gamma-phospho-Glu-tRNA(Gln). This is Glutamyl-tRNA(Gln) amidotransferase subunit A from Geobacillus sp. (strain WCH70).